The following is a 388-amino-acid chain: MKNKDYPLRSSMDELSTKNDNEIDLEKGPLPEYNSEDGSTLPPYSEIWKYIKTVSEDSSTGPTEIANPNVERRQEFKDSHPNIYSLLRLLISVLAVIVVFFTAWVCVNPLEKSIFGKVAFSVTIGITCPIVFIAIFCFFETWTQAVAQCIKVTVIFLAQCVKVTAISLAQCVKVTAVFLAKCVKVTAVFLAKCVKVIAVGLYNSKKDLVVTIWLAWVVICFILFGCVKDGRLNLNKALICSTCSISAALFFILLLVCIPIWTLKHMLFGLFQVLGVQSCVVIVTKGLMYLFDKHIDATGYEIEASSLFVIGNFLFFYEMERPGALKRMPKFIGNGIASFLGGLGNAFGGIGNAFGGIGNAIGRIGNAFRGANDNNDIPLGEMDVESEV.

The span at 1-29 shows a compositional bias: basic and acidic residues; that stretch reads MKNKDYPLRSSMDELSTKNDNEIDLEKGP. The segment at 1–39 is disordered; that stretch reads MKNKDYPLRSSMDELSTKNDNEIDLEKGPLPEYNSEDGS. 9 consecutive transmembrane segments (helical) span residues 89 to 109, 119 to 139, 152 to 172, 182 to 202, 207 to 227, 243 to 263, 267 to 287, 297 to 317, and 331 to 351; these read LLIS…CVNP, AFSV…FCFF, VTVI…AQCV, CVKV…VGLY, DLVV…FGCV, CSIS…IWTL, LFGL…TKGL, ATGY…LFFY, and FIGN…GGIG.

It belongs to the WTF family. In terms of assembly, homomer. Forms protein aggregates. The two isoforms can interact with each other and with themselves. High sequence similarity is required for their interaction.

Its subcellular location is the spore membrane. The protein resides in the vacuole membrane. It is found in the ascus epiplasm. The protein localises to the cytoplasm. It localises to the endoplasmic reticulum membrane. In terms of biological role, promotes unequal transmission of alleles from the parental zygote to progeny spores by acting as poison/antidote system where the poison and antidote proteins are produced from the same locus; the poison component is trans-acting and targets all spores within an ascus whereas the antidote component is spore-specific, leading to poisoning of all progeny that do not inherit the allele. Its function is as follows. Localizes isoform 2 to the vacuole thereby facilitating its degradation. In addition to suppressing isoform 2, also suppresses S.pombe strain FY29033 wtf18 isoform 2. Functionally, forms toxic aggregates that disrupt spore maturation. In Schizosaccharomyces pombe (strain 972 / ATCC 24843) (Fission yeast), this protein is Meiotic driver wtf13.